A 1078-amino-acid polypeptide reads, in one-letter code: Rho family-interacting cell polarization regulator 2 (1078 aa).

2 positions are modified to phosphoserine: S46 and S62. Positions 80 to 138 (MHNLGHKNNNTPKEPQPKRVEEVYRALKNGLDEYLEFHQTELDKLTAQLKDMKRNSRLG) are involved in cell filopodia formation. Residues 108 to 137 (NGLDEYLEFHQTELDKLTAQLKDMKRNSRL) are a coiled coil. The residue at position 366 (S366) is a Phosphoserine. Polar residues predominate over residues 488–508 (SSLSSQNEGTEDSSSASSRNS). Residues 488–534 (SSLSSQNEGTEDSSSASSRNSLGEDHEPKSHPKSDTVEPGKPGVATR) are disordered. Basic and acidic residues predominate over residues 509–525 (LGEDHEPKSHPKSDTVE). Position 582 is a phosphoserine (S582).

This sequence belongs to the RIPOR family. Homooligomer; homooligomerization is regulated by RHOC and leads to the formation of concatemers through the association of N- and C-termini. Interacts (phosphorylated form) with 14-3-3 proteins; these interactions occur during myogenic cell differentiation and also induces T cell proliferation arrest. Interacts (phosphorylated form) with HDAC6; this interaction occurs during early myogenic differentiation, prevents HDAC6 to deacetylate tubulin and also induces T cell proliferation arrest. Interacts with DYSF; this interaction occurs during early myogenic differentiation. Interacts with MYOF. Interacts (via active GTP- or inactive GDP-bound forms) with RHOA; this interaction is direct, blocks the loading of GTP to RHOA and decreases upon chemokine CCL19 stimulation in primary T lymphocytes. Interacts with RHOC. Interacts (via phosphorylated form) with YWHAB; this interaction occurs in a chemokine-dependent manner and does not compete for binding of RIPOR2 with RHOA nor blocks inhibition of RIPOR2-mediated RHOA activity. Interacts with YWHAE. Interacts with YWHAQ. In terms of processing, phosphorylated. Chemokine-induced phosphorylation in neutrophils occurs in a PKC- and AKT-dependent manner, resulting in RIPOR2 interaction with YWHAB and stabilization. Phosphorylated by PKCA, AKT1 and MAPKAPK1A; in vitro. In terms of tissue distribution, expressed in the cochlea. Expressed in inner hair cells and outer hair cells and Hensen's cells (at protein level). Expressed in the brain, cerebellum, spinal cord, retina, heart, spleen liver, kidney, bladder, muscle and lung. Expressed in the cochlea of the inner ear.

It is found in the cytoplasm. The protein resides in the cytoskeleton. The protein localises to the cell projection. Its subcellular location is the filopodium. It localises to the stereocilium. It is found in the stereocilium membrane. The protein resides in the apical cell membrane. Its function is as follows. Acts as an inhibitor of the small GTPase RHOA and plays several roles in the regulation of myoblast and hair cell differentiation, lymphocyte T proliferation and neutrophil polarization. Plays a role in fetal mononuclear myoblast differentiation by promoting filopodia and myotube formation. Maintains naive T lymphocytes in a quiescent state and prevents chemokine-induced T lymphocyte responses, such as cell adhesion, polarization and migration. Involved also in the regulation of neutrophil polarization, chemotaxis and adhesion. Required for normal development of inner and outer hair cell stereocilia within the cochlea of the inner ear. Plays a role for maintaining the structural organization of the basal domain of stereocilia. Involved in mechanosensory hair cell function. Required for normal hearing. In Mus musculus (Mouse), this protein is Rho family-interacting cell polarization regulator 2.